The following is a 1084-amino-acid chain: Putative tRNA-specific 2-thiouridylase (1084 aa).

Transmembrane regions (helical) follow at residues 1–21 (MLIF…FILT), 32–52 (FIIS…FYVI), and 309–329 (IITI…YLIL). Cysteine 538 (nucleophile) is an active-site residue. Cysteine 538 and cysteine 715 are disulfide-bonded. Cysteine 715 (cysteine persulfide intermediate) is an active-site residue.

Belongs to the MnmA/TRMU family.

The protein localises to the plastid. The protein resides in the apicoplast. It localises to the membrane. It carries out the reaction S-sulfanyl-L-cysteinyl-[protein] + uridine(34) in tRNA + AH2 + ATP = 2-thiouridine(34) in tRNA + L-cysteinyl-[protein] + A + AMP + diphosphate + H(+). Catalyzes the 2-thiolation of uridine at the wobble position (U34) of tRNA, leading to the formation of s(2)U34. Required for apicoplast maintenance. This chain is Putative tRNA-specific 2-thiouridylase, found in Plasmodium falciparum (isolate 3D7).